The sequence spans 476 residues: Nodulation protein NoeA (476 aa).

Not known; does not seem to participate in nod factor synthesis but required for nodulation on some specific Medicago species such as M.littoralis. In Rhizobium meliloti (strain 1021) (Ensifer meliloti), this protein is Nodulation protein NoeA (noeA).